The following is a 181-amino-acid chain: CDP-archaeol synthase (181 aa).

The next 5 helical transmembrane spans lie at 7 to 27 (VVWALWAMLPAYIPNNAAVLA), 55 to 75 (LIGTAAGTALALGLTQVTPSV), 88 to 108 (LRAGLGLAFGAMLGDIGASFL), 126 to 146 (LDFVVGALLCAFVAAPSWFTE), and 147 to 167 (TFTLPVLVVVVVATPVLHVVT).

This sequence belongs to the CDP-archaeol synthase family. Requires Mg(2+) as cofactor.

The protein resides in the cell membrane. The catalysed reaction is 2,3-bis-O-(geranylgeranyl)-sn-glycerol 1-phosphate + CTP + H(+) = CDP-2,3-bis-O-(geranylgeranyl)-sn-glycerol + diphosphate. It participates in membrane lipid metabolism; glycerophospholipid metabolism. Its function is as follows. Catalyzes the formation of CDP-2,3-bis-(O-geranylgeranyl)-sn-glycerol (CDP-archaeol) from 2,3-bis-(O-geranylgeranyl)-sn-glycerol 1-phosphate (DGGGP) and CTP. This reaction is the third ether-bond-formation step in the biosynthesis of archaeal membrane lipids. This chain is CDP-archaeol synthase, found in Haloarcula marismortui (strain ATCC 43049 / DSM 3752 / JCM 8966 / VKM B-1809) (Halobacterium marismortui).